The chain runs to 104 residues: Large ribosomal subunit protein bL21 (104 aa).

It belongs to the bacterial ribosomal protein bL21 family. As to quaternary structure, part of the 50S ribosomal subunit. Contacts protein L20.

This protein binds to 23S rRNA in the presence of protein L20. The polypeptide is Large ribosomal subunit protein bL21 (Elusimicrobium minutum (strain Pei191)).